Consider the following 341-residue polypeptide: Aspartate carbamoyltransferase catalytic subunit (341 aa).

Positions 74 and 75 each coordinate carbamoyl phosphate. Lys102 contributes to the L-aspartate binding site. Carbamoyl phosphate is bound by residues Arg124, His152, and Gln155. L-aspartate contacts are provided by Arg190 and Arg244. The carbamoyl phosphate site is built by Gly285 and Pro286.

It belongs to the aspartate/ornithine carbamoyltransferase superfamily. ATCase family. In terms of assembly, heterododecamer (2C3:3R2) of six catalytic PyrB chains organized as two trimers (C3), and six regulatory PyrI chains organized as three dimers (R2).

It catalyses the reaction carbamoyl phosphate + L-aspartate = N-carbamoyl-L-aspartate + phosphate + H(+). The protein operates within pyrimidine metabolism; UMP biosynthesis via de novo pathway; (S)-dihydroorotate from bicarbonate: step 2/3. In terms of biological role, catalyzes the condensation of carbamoyl phosphate and aspartate to form carbamoyl aspartate and inorganic phosphate, the committed step in the de novo pyrimidine nucleotide biosynthesis pathway. This chain is Aspartate carbamoyltransferase catalytic subunit, found in Novosphingobium aromaticivorans (strain ATCC 700278 / DSM 12444 / CCUG 56034 / CIP 105152 / NBRC 16084 / F199).